The primary structure comprises 169 residues: Nucleoside-triphosphatase THEP1 (169 aa).

Residues 11–18 and 100–107 contribute to the ATP site; these read GEPGVGKT and IIGIDEIG.

The protein belongs to the THEP1 NTPase family.

The enzyme catalyses a ribonucleoside 5'-triphosphate + H2O = a ribonucleoside 5'-diphosphate + phosphate + H(+). Functionally, has nucleotide phosphatase activity towards ATP, GTP, CTP, TTP and UTP. May hydrolyze nucleoside diphosphates with lower efficiency. The polypeptide is Nucleoside-triphosphatase THEP1 (Sulfurisphaera tokodaii (strain DSM 16993 / JCM 10545 / NBRC 100140 / 7) (Sulfolobus tokodaii)).